Consider the following 130-residue polypeptide: Small ribosomal subunit protein uS9 (130 aa).

Residues 108–130 (SREVERKKVGLRKARKRPQYSKR) form a disordered region. Residues 116–130 (VGLRKARKRPQYSKR) are compositionally biased toward basic residues.

This sequence belongs to the universal ribosomal protein uS9 family.

This is Small ribosomal subunit protein uS9 from Cellvibrio japonicus (strain Ueda107) (Pseudomonas fluorescens subsp. cellulosa).